We begin with the raw amino-acid sequence, 497 residues long: Ethanolamine-phosphate phospho-lyase (497 aa).

Residue Lys-278 is modified to N6-(pyridoxal phosphate)lysine. The interval 440 to 497 is disordered; the sequence is TGAETESGISKNTPCRTKMPKEAQSELLRDSSLESRENPSQKRNGLCTDSLLSKRLRT. Positions 458-479 are enriched in basic and acidic residues; that stretch reads MPKEAQSELLRDSSLESRENPS.

It belongs to the class-III pyridoxal-phosphate-dependent aminotransferase family. In terms of assembly, homotetramer. The cofactor is pyridoxal 5'-phosphate.

The protein localises to the mitochondrion. The enzyme catalyses phosphoethanolamine + H2O = acetaldehyde + NH4(+) + phosphate. Its function is as follows. Catalyzes the pyridoxal-phosphate-dependent breakdown of phosphoethanolamine, converting it to ammonia, inorganic phosphate and acetaldehyde. The chain is Ethanolamine-phosphate phospho-lyase (ETNPPL) from Bos taurus (Bovine).